Consider the following 95-residue polypeptide: Aspartyl/glutamyl-tRNA(Asn/Gln) amidotransferase subunit C (95 aa).

This sequence belongs to the GatC family. As to quaternary structure, heterotrimer of A, B and C subunits.

The catalysed reaction is L-glutamyl-tRNA(Gln) + L-glutamine + ATP + H2O = L-glutaminyl-tRNA(Gln) + L-glutamate + ADP + phosphate + H(+). The enzyme catalyses L-aspartyl-tRNA(Asn) + L-glutamine + ATP + H2O = L-asparaginyl-tRNA(Asn) + L-glutamate + ADP + phosphate + 2 H(+). Its function is as follows. Allows the formation of correctly charged Asn-tRNA(Asn) or Gln-tRNA(Gln) through the transamidation of misacylated Asp-tRNA(Asn) or Glu-tRNA(Gln) in organisms which lack either or both of asparaginyl-tRNA or glutaminyl-tRNA synthetases. The reaction takes place in the presence of glutamine and ATP through an activated phospho-Asp-tRNA(Asn) or phospho-Glu-tRNA(Gln). This Desulforapulum autotrophicum (strain ATCC 43914 / DSM 3382 / VKM B-1955 / HRM2) (Desulfobacterium autotrophicum) protein is Aspartyl/glutamyl-tRNA(Asn/Gln) amidotransferase subunit C.